Consider the following 288-residue polypeptide: Phosphatidylserine decarboxylase proenzyme (288 aa).

Catalysis depends on charge relay system; for autoendoproteolytic cleavage activity residues D89, H146, and S252. Catalysis depends on S252, which acts as the Schiff-base intermediate with substrate; via pyruvic acid; for decarboxylase activity. The residue at position 252 (S252) is a Pyruvic acid (Ser); by autocatalysis.

It belongs to the phosphatidylserine decarboxylase family. PSD-B subfamily. Prokaryotic type I sub-subfamily. In terms of assembly, heterodimer of a large membrane-associated beta subunit and a small pyruvoyl-containing alpha subunit. Requires pyruvate as cofactor. Is synthesized initially as an inactive proenzyme. Formation of the active enzyme involves a self-maturation process in which the active site pyruvoyl group is generated from an internal serine residue via an autocatalytic post-translational modification. Two non-identical subunits are generated from the proenzyme in this reaction, and the pyruvate is formed at the N-terminus of the alpha chain, which is derived from the carboxyl end of the proenzyme. The autoendoproteolytic cleavage occurs by a canonical serine protease mechanism, in which the side chain hydroxyl group of the serine supplies its oxygen atom to form the C-terminus of the beta chain, while the remainder of the serine residue undergoes an oxidative deamination to produce ammonia and the pyruvoyl prosthetic group on the alpha chain. During this reaction, the Ser that is part of the protease active site of the proenzyme becomes the pyruvoyl prosthetic group, which constitutes an essential element of the active site of the mature decarboxylase.

The protein localises to the cell membrane. It carries out the reaction a 1,2-diacyl-sn-glycero-3-phospho-L-serine + H(+) = a 1,2-diacyl-sn-glycero-3-phosphoethanolamine + CO2. It participates in phospholipid metabolism; phosphatidylethanolamine biosynthesis; phosphatidylethanolamine from CDP-diacylglycerol: step 2/2. Catalyzes the formation of phosphatidylethanolamine (PtdEtn) from phosphatidylserine (PtdSer). This is Phosphatidylserine decarboxylase proenzyme from Shewanella frigidimarina (strain NCIMB 400).